A 90-amino-acid polypeptide reads, in one-letter code: MARMVNCIKLGREAEGLDLPPVPGELGKRIYESVSKEAWQQWVKYQTMLINENRLNLMDPRARKYLSEQMEKHFFEGGADAIGGFVPPAQ.

It belongs to the Fe(2+)-trafficking protein family.

Could be a mediator in iron transactions between iron acquisition and iron-requiring processes, such as synthesis and/or repair of Fe-S clusters in biosynthetic enzymes. The protein is Probable Fe(2+)-trafficking protein of Azoarcus sp. (strain BH72).